The chain runs to 232 residues: 5'-methylthioadenosine/S-adenosylhomocysteine nucleosidase (232 aa).

Catalysis depends on Glu12, which acts as the Proton acceptor. Substrate is bound by residues Gly78, Ile152, and 173-174 (ME). Catalysis depends on Asp197, which acts as the Proton donor.

It belongs to the PNP/UDP phosphorylase family. MtnN subfamily. As to quaternary structure, homodimer.

It catalyses the reaction S-adenosyl-L-homocysteine + H2O = S-(5-deoxy-D-ribos-5-yl)-L-homocysteine + adenine. The enzyme catalyses S-methyl-5'-thioadenosine + H2O = 5-(methylsulfanyl)-D-ribose + adenine. The catalysed reaction is 5'-deoxyadenosine + H2O = 5-deoxy-D-ribose + adenine. It functions in the pathway amino-acid biosynthesis; L-methionine biosynthesis via salvage pathway; S-methyl-5-thio-alpha-D-ribose 1-phosphate from S-methyl-5'-thioadenosine (hydrolase route): step 1/2. In terms of biological role, catalyzes the irreversible cleavage of the glycosidic bond in both 5'-methylthioadenosine (MTA) and S-adenosylhomocysteine (SAH/AdoHcy) to adenine and the corresponding thioribose, 5'-methylthioribose and S-ribosylhomocysteine, respectively. Also cleaves 5'-deoxyadenosine, a toxic by-product of radical S-adenosylmethionine (SAM) enzymes, into 5-deoxyribose and adenine. Thus, is required for in vivo function of the radical SAM enzymes biotin synthase and lipoic acid synthase, that are inhibited by 5'-deoxyadenosine accumulation. In Citrobacter koseri (strain ATCC BAA-895 / CDC 4225-83 / SGSC4696), this protein is 5'-methylthioadenosine/S-adenosylhomocysteine nucleosidase.